The sequence spans 106 residues: Large ribosomal subunit protein uL24 (106 aa).

It belongs to the universal ribosomal protein uL24 family. In terms of assembly, part of the 50S ribosomal subunit.

Its function is as follows. One of two assembly initiator proteins, it binds directly to the 5'-end of the 23S rRNA, where it nucleates assembly of the 50S subunit. In terms of biological role, one of the proteins that surrounds the polypeptide exit tunnel on the outside of the subunit. In Bordetella bronchiseptica (strain ATCC BAA-588 / NCTC 13252 / RB50) (Alcaligenes bronchisepticus), this protein is Large ribosomal subunit protein uL24.